A 239-amino-acid polypeptide reads, in one-letter code: Probable transcriptional regulatory protein Aave_3203 (239 aa).

The disordered stretch occupies residues 1 to 20; sequence MAGHSKWANIQHRKGRQDEK.

Belongs to the TACO1 family.

The protein resides in the cytoplasm. This Paracidovorax citrulli (strain AAC00-1) (Acidovorax citrulli) protein is Probable transcriptional regulatory protein Aave_3203.